Here is a 606-residue protein sequence, read N- to C-terminus: Scavenger receptor class A member 3 (606 aa).

Over 1–56 the chain is Cytoplasmic; sequence MKVRSAGGDGDALCVTEEDLAGDDEDMPTFPCTQKGRPGPRCSRCQKNLSLHTSVR. A helical; Signal-anchor for type II membrane protein membrane pass occupies residues 57–77; the sequence is ILYLFLALLLVAVAVLASLVF. The Extracellular portion of the chain corresponds to 78 to 606; that stretch reads RKVDSLSEDI…PGPPGSQSFY (529 aa). N-linked (GlcNAc...) asparagine glycans are attached at residues Asn115, Asn182, Asn224, Asn257, Asn313, Asn337, Asn365, Asn400, Asn430, and Asn451. The disordered stretch occupies residues 454-606; that stretch reads ILRGAPGPPG…PGPPGSQSFY (153 aa). One can recognise a Collagen-like 1 domain in the interval 455-513; it reads LRGAPGPPGPRGFKGDMGVKGPVGGRGPKGDPGSLGPLGPQGPQGQPGEAGPVGERGPV. Positions 485–519 are enriched in low complexity; it reads DPGSLGPLGPQGPQGQPGEAGPVGERGPVGPRGFP. Gly residues predominate over residues 526 to 535; it reads GSFGTGGPRG. In terms of domain architecture, Collagen-like 2 spans 544-603; that stretch reads GPPGPEGPPGSPGPSGPQGKPGIAGKTGSPGQRGAMGPKGEPGIQGPPGLPGPPGPPGSQ. Composition is skewed to pro residues over residues 545 to 558 and 591 to 600; these read PPGP…PGPS and PGLPGPPGPP.

As to expression, expressed ubiquitously.

Its subcellular location is the endoplasmic reticulum membrane. The protein localises to the golgi apparatus membrane. Seems to protect cells by scavenging oxidative molecules or harmful products of oxidation. This is Scavenger receptor class A member 3 (SCARA3) from Homo sapiens (Human).